A 307-amino-acid polypeptide reads, in one-letter code: Protein FAM76A (307 aa).

2 disordered regions span residues 142–195 (QRKH…ESIT) and 287–307 (KQAA…ITSP). The span at 161–182 (SRLSGGSHYNSQKTLSTSSIQN) shows a compositional bias: polar residues. Residues 217–299 (IIAQLKEEVA…AALSKSKKSE (83 aa)) are a coiled coil.

This sequence belongs to the FAM76 family.

The sequence is that of Protein FAM76A (FAM76A) from Bos taurus (Bovine).